The primary structure comprises 216 residues: Fibroblast growth factor 17 (216 aa).

The N-terminal stretch at 1–22 (MGAARLLPNLTLCLQLLILCCQ) is a signal peptide. A glycan (N-linked (GlcNAc...) asparagine) is linked at Asn-137. The disordered stretch occupies residues 190–216 (EKQKQFEFVGSAPTRRTKRTRRPQPLT). Residues 204–216 (RRTKRTRRPQPLT) show a composition bias toward basic residues.

Belongs to the heparin-binding growth factors family. Interacts with FGFR3 and FGFR4. In terms of tissue distribution, preferentially expressed in the embryonic brain.

Its subcellular location is the secreted. In terms of biological role, plays an important role in the regulation of embryonic development and as signaling molecule in the induction and patterning of the embryonic brain. Required for normal brain development. The sequence is that of Fibroblast growth factor 17 (FGF17) from Homo sapiens (Human).